The sequence spans 177 residues: Protein Flattop (177 aa).

Residues 113–177 (ILGKPHDPDS…TPGPQRPAKS (65 aa)) are disordered. Over residues 115–124 (GKPHDPDSQK) the composition is skewed to basic and acidic residues. The span at 132–163 (TKTVQQARSPTIIPSSPAANLNSPDELQSSHP) shows a compositional bias: polar residues.

Belongs to the Flattop family. As to quaternary structure, microtubule inner protein component of sperm flagellar doublet microtubules. Interacts with DLG3. In terms of tissue distribution, expressed in airway epithelial cells.

It localises to the cytoplasm. The protein localises to the cytoskeleton. The protein resides in the cilium basal body. Its subcellular location is the cell projection. It is found in the cilium. It localises to the apical cell membrane. The protein localises to the cilium axoneme. The protein resides in the flagellum axoneme. In terms of biological role, microtubule inner protein (MIP) part of the dynein-decorated doublet microtubules (DMTs) in cilia axoneme. Acts as a regulator of cilium basal body docking and positioning in mono- and multiciliated cells. Regulates basal body docking and cilia formation in multiciliated lung cells. Regulates kinocilium positioning and stereocilia bundle morphogenesis in the inner ear. This chain is Protein Flattop, found in Homo sapiens (Human).